The primary structure comprises 587 residues: Probable pectinesterase/pectinesterase inhibitor 61 (587 aa).

The segment at 1–23 is disordered; the sequence is MGYDRLGPSGPSNPNQKDPATSL. The segment covering 10 to 19 has biased composition (polar residues); that stretch reads GPSNPNQKDP. Residues 35 to 55 form a helical membrane-spanning segment; sequence ILFTLAVLVVGVVCFGIFAGI. The interval 69 to 223 is pectinesterase inhibitor 61; sequence RKPTQAISRT…SEMVSNCLAI (155 aa). Residues 273 to 571 form a pectinesterase 61 region; sequence DITVSKDGSG…FTVAQFISGS (299 aa). The substrate site is built by T349 and Q379. Residue D402 is the Proton donor; for pectinesterase activity of the active site. C416 and C436 form a disulfide bridge. The active-site Nucleophile; for pectinesterase activity is D423. R491 and W493 together coordinate substrate.

It in the N-terminal section; belongs to the PMEI family. This sequence in the C-terminal section; belongs to the pectinesterase family. Expressed in siliques, floral stems and rosettes leaves.

Its subcellular location is the membrane. The catalysed reaction is [(1-&gt;4)-alpha-D-galacturonosyl methyl ester](n) + n H2O = [(1-&gt;4)-alpha-D-galacturonosyl](n) + n methanol + n H(+). It functions in the pathway glycan metabolism; pectin degradation; 2-dehydro-3-deoxy-D-gluconate from pectin: step 1/5. Functionally, acts in the modification of cell walls via demethylesterification of cell wall pectin. The sequence is that of Probable pectinesterase/pectinesterase inhibitor 61 (PME61) from Arabidopsis thaliana (Mouse-ear cress).